A 324-amino-acid polypeptide reads, in one-letter code: MFPSPALTPTPFSVKDILNLEQQQRSLAAAGELSARLEATLAPSSCMLAAFKPEAYAGPEAAAPGLPELRAELGRAPSPAKCASAFPAAPAFYPRAYSDPDPAKDPRAEKKELCALQKAVELEKTEADNAERPRARRRRKPRVLFSQAQVYELERRFKQQRYLSAPERDQLASVLKLTSTQVKIWFQNRRYKCKRQRQDQTLELVGLPPPPPPPARRIAVPVLVRDGKPCLGDSAPYAPAYGVGLNPYGYNAYPAYPGYGGAACSPGYSCTAAYPAGPSPAQPATAAANNNFVNFGVGDLNAVQSPGIPQSNSGVSTLHGIRAW.

The homeobox DNA-binding region spans 138-197 (RRKPRVLFSQAQVYELERRFKQQRYLSAPERDQLASVLKLTSTQVKIWFQNRRYKCKRQR).

It belongs to the NK-2 homeobox family. Homodimer (via the homeobox); binds DNA as homodimer. Interacts (via the homeobox) with TBX5 (via the T-box); this complex binds DNA. Interacts with HIPK1 and HIPK2, but not HIPK3. Interacts with the C-terminal zinc finger of GATA4 through its homeobox domain. Also interacts with JARID2 which represses its ability to activate transcription of ANF. Interacts with FBLIM1. Interacts with TBX18. Interacts with histone methyltransferase NSD2 (via HMG box). Interacts with NEDD9. Interacts with TBX1. Expressed only in the heart.

It is found in the nucleus. Functionally, transcription factor required for the development of the heart and the spleen. During heart development, acts as a transcriptional activator of NPPA/ANF in cooperation with GATA4. May cooperate with TBX2 to negatively modulate expression of NPPA/ANF in the atrioventricular canal. Binds to the core DNA motif of NPPA promoter. Together with PBX1, required for spleen development through a mechanism that involves CDKN2B repression. Positively regulates transcription of genes such as COL3A1 and MMP2, resulting in increased pulmonary endothelial fibrosis in response to hypoxia. This chain is Homeobox protein Nkx-2.5 (NKX2-5), found in Homo sapiens (Human).